The chain runs to 898 residues: Vacuolar membrane protease (898 aa).

Residues 1 to 14 (MGIVDYLVAAVSFR) are Cytoplasmic-facing. A helical membrane pass occupies residues 15 to 35 (TLPTTFVAVLVYLAIFISVLI). Residues 36 to 342 (TDELPATPKD…LFGQALIVFP (307 aa)) are Vacuolar-facing. Residues asparagine 50, asparagine 103, and asparagine 110 are each glycosylated (N-linked (GlcNAc...) asparagine). Positions 139 and 151 each coordinate Zn(2+). The Proton acceptor role is filled by glutamate 183. Residue glutamate 184 participates in Zn(2+) binding. Asparagine 200 carries an N-linked (GlcNAc...) asparagine glycan. Residues glutamate 209 and histidine 284 each coordinate Zn(2+). A helical membrane pass occupies residues 343–365 (LSAMITFNIVFLVVGPIMLALLV). The Cytoplasmic segment spans residues 366–411 (TFDIVARHRRQEMIGGGYEEQGFFARAWTSFKSFRWVGGFWKHAKF). Residues 412–432 (WVALAVTVGLQVLLCVGYLYI) traverse the membrane as a helical segment. Position 433 (asparagine 433) is a topological domain, vacuolar. Residues 434-454 (PLIAYSSSHIVLLSFLSLAYL) form a helical membrane-spanning segment. At 455 to 479 (STYLVHNIPSPTDTYGSHLPEQQKQ) the chain is on the cytoplasmic side. Residues 480–500 (AALFQLYFFTWILLLAATVVG) traverse the membrane as a helical segment. Residues 501 to 509 (AKLSVGSFY) lie on the Vacuolar side of the membrane. A helical transmembrane segment spans residues 510 to 530 (ILSLWNAVLFAACAIGSIAGL). Residues 531-593 (LSSHTVEGDA…PGGKEGEEVS (63 aa)) are Cytoplasmic-facing. The helical transmembrane segment at 594 to 614 (GAIGWWFVQFVLSVPAVVILV) threads the bilayer. The Vacuolar portion of the chain corresponds to 615-635 (SQLALLMLAATEQTLADGSPA). Residues 636–656 (VTVYGGASLMSVLAILPLAPF) traverse the membrane as a helical segment. Residues 657 to 664 (ACKLHRRV) lie on the Cytoplasmic side of the membrane. Residues 665 to 685 (AYVALVVLIASTAYAWLVFPF) form a helical membrane-spanning segment. The Vacuolar segment spans residues 686-898 (SERAPLKVFF…LVEGYKAFAV (213 aa)). Asparagine 704, asparagine 733, and asparagine 764 each carry an N-linked (GlcNAc...) asparagine glycan.

Belongs to the peptidase M28 family. Requires Zn(2+) as cofactor.

The protein resides in the vacuole membrane. Its function is as follows. May be involved in vacuolar sorting and osmoregulation. This is Vacuolar membrane protease from Schizophyllum commune (strain H4-8 / FGSC 9210) (Split gill fungus).